The following is a 757-amino-acid chain: DNA endonuclease RBBP8 (757 aa).

The interval 22–45 (DLWTKLKEYHDKETQGLQVKVTKL) is essential for binding to the MRN complex and for RPA focus formation on DNA damage. The stretch at 35-84 (TQGLQVKVTKLKKERILDAQRLEEFFTKNQQLREQQKVLHETIKVLEDRL) forms a coiled coil. The tract at residues 45–160 (LKKERILDAQ…TDLESEEDVI (116 aa)) is required for interaction with LMO4, probably by stabilizing the interaction through RPPB8 dimerization. Glycyl lysine isopeptide (Lys-Gly) (interchain with G-Cter in SUMO2) cross-links involve residues Lys-62 and Lys-115. A coiled-coil region spans residues 117 to 138 (ITELMNEKNTLQEENKKLSEQL). Lys-193 participates in a covalent cross-link: Glycyl lysine isopeptide (Lys-Gly) (interchain with G-Cter in SUMO2). At Ser-272 the chain carries Phosphoserine. Thr-309 is subject to Phosphothreonine. Phosphoserine occurs at positions 320, 321, and 343. The tract at residues 348-375 (GKKTHLKTVPLSNTSAPGPEKPRSKSED) is disordered. Glycyl lysine isopeptide (Lys-Gly) (interchain with G-Cter in SUMO2) cross-links involve residues Lys-354 and Lys-372. Ser-373 carries the post-translational modification Phosphoserine. Glycyl lysine isopeptide (Lys-Gly) (interchain with G-Cter in SUMO2) cross-links involve residues Lys-390, Lys-399, and Lys-405. Positions 407-417 (TSEPISEQGNI) are enriched in polar residues. Positions 407-430 (TSEPISEQGNIGHSKDTDRDKHVV) are disordered. Over residues 419–429 (HSKDTDRDKHV) the composition is skewed to basic and acidic residues. Residues Lys-433 and Lys-443 each participate in a glycyl lysine isopeptide (Lys-Gly) (interchain with G-Cter in SUMO2) cross-link. A PXDLS motif region spans residues 484 to 488 (PLDLS). The PXDLS motif motif lies at 484-488 (PLDLS). Residues 503–551 (CENSKIRFRQVTLYEALKPIPRDSSSSRKALSGSCGLTKDSPEEPCLQE) are damage-recruitment motif. Lys-520 participates in a covalent cross-link: Glycyl lysine isopeptide (Lys-Gly) (interchain with G-Cter in SUMO2); alternate. The disordered stretch occupies residues 524–544 (RDSSSSRKALSGSCGLTKDSP). Glycyl lysine isopeptide (Lys-Gly) (interchain with G-Cter in SUMO2) cross-links involve residues Lys-564 and Lys-570. Lys-596 participates in a covalent cross-link: Glycyl lysine isopeptide (Lys-Gly) (interchain with G-Cter in SUMO2); alternate. Residues Lys-605, Lys-630, and Lys-632 each participate in a glycyl lysine isopeptide (Lys-Gly) (interchain with G-Cter in SUMO2) cross-link. The segment at 633–677 (SLQNNQDVSFENIQWSIDPGADLSQYKMGVTVDDTKDGSQSRLAG) is required for interaction with LMO4, probably by making physical contact with LMO4. Ser-656 bears the Phosphoserine; by ATM mark. A Glycyl lysine isopeptide (Lys-Gly) (interchain with G-Cter in SUMO2) cross-link involves residue Lys-668. Ser-671 is modified (phosphoserine). The span at 696 to 728 (KKQEQKGEESPNGERKMNDSLEDMFDRTTHEEY) shows a compositional bias: basic and acidic residues. Positions 696-757 (KKQEQKGEES…TTTKKPNISW (62 aa)) are disordered. Residue Lys-711 forms a Glycyl lysine isopeptide (Lys-Gly) (interchain with G-Cter in SUMO2) linkage. Ser-715 carries the post-translational modification Phosphoserine. The span at 747–757 (STTTKKPNISW) shows a compositional bias: polar residues.

This sequence belongs to the COM1/SAE2/CtIP family. Homotetramer; formed by antiparallel association of helical extensions protruding from the N-termini of two parallel coiled-coil dimers. Forms a dumbbell-shaped particle in which polar globular domains are held about 30 nm apart by a central rod. Homotetramerization is required for DNA-end resection and repair. Interacts (via the PXDLS motif) with CTBP1; the interaction is disrupted via binding of the adenovirus E1A to CTBP1. Component of the BRCA1-RBBP8 complex. Interacts (the Ser-321 phosphorylated form) with BRCA1 (via the C-terminal BRCT domains): the interaction occurs in the G2 phase, ubiquitinates RBBP8 and involves RBBP8 in BRCA1-dependent G2/M checkpoint control on DNA damage. Interacts with RB1. Interacts with the MRN complex. Interacts directly with MRE11; the interaction is required for efficient homologous recombination (HR) and regulation of the MRN complex. Interacts directly with RAD50. Interacts (when phosphorylated by CDK1) with NBN; promoting association with the MRN complex. Interacts with LMO4 (via the LIM zinc-binding 1 domain). Interacts with SIAH1. Interacts with RNF138. Interacts with EXD2. Interacts with CUL3 and KLHL15; this interaction leads to RBBP8 proteasomal degradation. Directly interacts with PIN1; this interaction depends upon RBBP8 phosphorylation, predominantly at Thr-309. Interacts with FZR1; this interaction leads to APC/C-mediated RBBP8 proteasomal degradation. Interacts with AUNIP; leading to recruit RBBP8 to sites of DNA damage. Interacts with SAMHD1. Interacts with HDGFL2. Hyperphosphorylation upon ionizing radiation results in dissociation from BRCA1. Phosphorylation by CDK1 is essential for the recruitment to DNA and the DNA repair function. Phosphorylated on Ser-321 as cells enter G2 phase. This phosphorylation is required for binding BRCA1 and for the G2/M DNA damage transition checkpoint control. Phosphorylation at Thr-309, probably catalyzed by CDK2, is required for PIN1-binding, while phosphorylation at Ser-272 serves as a PIN1 isomerization site. Phosphorylation at Thr-309 is cell-cycle dependent. It steadily increases during S phase, peaks at late S/G2 phase, and drops at G1. Phosphorylation is not required for tetramerization. Binds to DNA more strongly when dephosphorylated. In terms of processing, ubiquitinated. Ubiquitination at multiple sites by BRCA1 (via its N-terminal RING domain) does not lead to its proteasomal degradation but instead the ubiquitinated RBBP8 binds to chromatin following DNA damage and may play a role in G2/M checkpoint control. Ubiquitinated by RNF138 at its N-terminus. Ubiquitinated through 'Lys-48' by the E3 CUL3-KLHL15 complex; this modification leads to proteasomal degradation. Ubiquitinated by the E3 FZR1/APC/C complex; this modification leads to proteasomal degradation.

The protein localises to the nucleus. The protein resides in the chromosome. Functionally, endonuclease that cooperates with the MRE11-RAD50-NBN (MRN) complex in DNA-end resection, the first step of double-strand break (DSB) repair through the homologous recombination (HR) pathway. HR is restricted to S and G2 phases of the cell cycle and preferentially repairs DSBs resulting from replication fork collapse. Key determinant of DSB repair pathway choice, as it commits cells to HR by preventing classical non-homologous end-joining (NHEJ). Specifically promotes the endonuclease activity of the MRN complex to clear DNA ends containing protein adducts: recruited to DSBs by NBN following phosphorylation by CDK1, and promotes the endonuclease activity of MRE11 to clear protein-DNA adducts and generate clean double-strand break ends. Functions downstream of the MRN complex and ATM, promotes ATR activation and its recruitment to DSBs in the S/G2 phase facilitating the generation of ssDNA. Component of the BRCA1-RBBP8 complex that regulates CHEK1 activation and controls cell cycle G2/M checkpoints on DNA damage. During immunoglobulin heavy chain class-switch recombination, promotes microhomology-mediated alternative end joining (A-NHEJ) and plays an essential role in chromosomal translocations. Binds preferentially to DNA Y-junctions and to DNA substrates with blocked ends and promotes intermolecular DNA bridging. This chain is DNA endonuclease RBBP8 (RBBP8), found in Bos taurus (Bovine).